The primary structure comprises 69 residues: Small, acid-soluble spore protein I (69 aa).

This sequence belongs to the SspI family.

The protein localises to the spore core. The protein is Small, acid-soluble spore protein I of Geobacillus kaustophilus (strain HTA426).